A 2290-amino-acid chain; its full sequence is Protein Ycf2 (2290 aa).

1638–1645 (GSIGTGRS) provides a ligand contact to ATP.

Belongs to the Ycf2 family.

It localises to the plastid. Its subcellular location is the chloroplast stroma. In terms of biological role, probable ATPase of unknown function. Its presence in a non-photosynthetic plant (Epifagus virginiana) and experiments in tobacco indicate that it has an essential function which is probably not related to photosynthesis. The sequence is that of Protein Ycf2 from Phalaenopsis aphrodite subsp. formosana (Moth orchid).